The sequence spans 673 residues: UvrABC system protein B (673 aa).

The Helicase ATP-binding domain maps to N30–R417. G43–T50 lines the ATP pocket. Positions Y96–I119 match the Beta-hairpin motif. Residues Q434–L600 form the Helicase C-terminal domain. Residues K627–K662 enclose the UVR domain.

The protein belongs to the UvrB family. Forms a heterotetramer with UvrA during the search for lesions. Interacts with UvrC in an incision complex.

It localises to the cytoplasm. In terms of biological role, the UvrABC repair system catalyzes the recognition and processing of DNA lesions. A damage recognition complex composed of 2 UvrA and 2 UvrB subunits scans DNA for abnormalities. Upon binding of the UvrA(2)B(2) complex to a putative damaged site, the DNA wraps around one UvrB monomer. DNA wrap is dependent on ATP binding by UvrB and probably causes local melting of the DNA helix, facilitating insertion of UvrB beta-hairpin between the DNA strands. Then UvrB probes one DNA strand for the presence of a lesion. If a lesion is found the UvrA subunits dissociate and the UvrB-DNA preincision complex is formed. This complex is subsequently bound by UvrC and the second UvrB is released. If no lesion is found, the DNA wraps around the other UvrB subunit that will check the other stand for damage. The polypeptide is UvrABC system protein B (Borreliella burgdorferi (strain ATCC 35210 / DSM 4680 / CIP 102532 / B31) (Borrelia burgdorferi)).